Consider the following 426-residue polypeptide: Actin-like protein 6B (426 aa).

An essential for mediating its function in dendritic development; may contribute to neuronal-specific targeting region spans residues 39–82 (TTVGLLAAEEGGGLELEGEKEKKGKIFHIDTNALHVPRDGAEVM).

This sequence belongs to the actin family. In terms of assembly, component of the multiprotein chromatin-remodeling complexes SWI/SNF: SWI/SNF-A (BAF), SWI/SNF-B (PBAF) and related complexes. The canonical complex contains a catalytic subunit (either SMARCA4/BRG1/BAF190A or SMARCA2/BRM/BAF190B) and at least SMARCE1, ACTL6A/BAF53, SMARCC1/BAF155, SMARCC2/BAF170, and SMARCB1/SNF5/BAF47. Other subunits specific to each of the complexes may also be present permitting several possible combinations developmentally and tissue specific. Component of the BAF complex, which includes at least actin (ACTB), ARID1A/BAF250A, ARID1B/BAF250B, SMARCA2/BRM, SMARCA4/BRG1/BAF190A, ACTL6A/BAF53, ACTL6B/BAF53B, SMARCE1/BAF57, SMARCC1/BAF155, SMARCC2/BAF170, SMARCB1/SNF5/INI1, and one or more SMARCD1/BAF60A, SMARCD2/BAF60B, or SMARCD3/BAF60C. Component of neuron-specific chromatin remodeling complex (nBAF complex) composed of at least, ARID1A/BAF250A or ARID1B/BAF250B, SMARCD1/BAF60A or SMARCD2/BAF60B or SMARCD3/BAF60C, SMARCA2/BRM/BAF190B, SMARCA4/BRG1/BAF190A, SMARCB1/BAF47, SMARCC1/BAF155, SMARCE1/BAF57, SMARCC2/BAF170, DPF1/BAF45B, DPF3/BAF45C, ACTL6B/BAF53B and actin (ACTB). Note that the nBAF complex is polymorphic in regard to the ATPase, SMARCA2 and SMARCA4 occupying mutually exclusive positions. May be a component of the SWI/SNF-B (PBAF) chromatin remodeling complex, at least composed of SMARCA4/BRG1, SMARCB1/BAF47/SNF5, ACTL6A/BAF53A or ACTL6B/BAF53B, SMARCE1/BAF57, SMARCD1/BAF60A, SMARCD2/BAF60B, perhaps SMARCD3/BAF60C, SMARCC1/BAF155, SMARCC2/BAF170, PBRM1/BAF180, ARID2/BAF200 and actin.

The protein localises to the nucleus. Its function is as follows. Involved in transcriptional activation and repression of select genes by chromatin remodeling (alteration of DNA-nucleosome topology). Component of SWI/SNF chromatin remodeling complexes that carry out key enzymatic activities, changing chromatin structure by altering DNA-histone contacts within a nucleosome in an ATP-dependent manner. Belongs to the neuron-specific chromatin remodeling complex (nBAF complex), as such plays a role in remodeling mononucleosomes in an ATP-dependent fashion, and is required for postmitotic neural development and dendritic outgrowth. During neural development a switch from a stem/progenitor to a postmitotic chromatin remodeling mechanism occurs as neurons exit the cell cycle and become committed to their adult state. The transition from proliferating neural stem/progenitor cells to postmitotic neurons requires a switch in subunit composition of the npBAF and nBAF complexes. As neural progenitors exit mitosis and differentiate into neurons, npBAF complexes which contain ACTL6A/BAF53A and PHF10/BAF45A, are exchanged for homologous alternative ACTL6B/BAF53B and DPF1/BAF45B or DPF3/BAF45C subunits in neuron-specific complexes (nBAF). The npBAF complex is essential for the self-renewal/proliferative capacity of the multipotent neural stem cells. The nBAF complex along with CREST plays a role regulating the activity of genes essential for dendrite growth. ACTL6B/BAF53B is not essential for assembly of the nBAF complex but is required for targeting the complex and CREST to the promoter of genes essential for dendritic growth. Essential for neuronal maturation and dendrite development. This is Actin-like protein 6B (ACTL6B) from Bos taurus (Bovine).